A 164-amino-acid polypeptide reads, in one-letter code: Ribosome maturation factor RimM (164 aa).

Residues 90 to 161 (KGSYFIADLI…TVTIKPLEIW (72 aa)) form the PRC barrel domain.

Belongs to the RimM family. Binds ribosomal protein uS19.

The protein resides in the cytoplasm. An accessory protein needed during the final step in the assembly of 30S ribosomal subunit, possibly for assembly of the head region. Essential for efficient processing of 16S rRNA. May be needed both before and after RbfA during the maturation of 16S rRNA. It has affinity for free ribosomal 30S subunits but not for 70S ribosomes. This Clostridium botulinum (strain ATCC 19397 / Type A) protein is Ribosome maturation factor RimM.